The chain runs to 637 residues: Nucleoside triphosphatase I (637 aa).

Residues 43 to 205 (FLGLNSMNSI…QMLVNLLRPG (163 aa)) enclose the Helicase ATP-binding domain. 56–63 (QETGVGKT) is an ATP binding site. The short motif at 142–145 (DECH) is the DEXH box element. Residues 358 to 537 (ELYNYLYEHS…QLYKVFKHSS (180 aa)) enclose the Helicase C-terminal domain. A binding to the cap-specific mRNA (nucleoside-2'-O-)-methyltransferase region spans residues 459–526 (DIFILDMTWN…DIIQSKSKEF (68 aa)).

The protein belongs to the helicase family. NPH I subfamily. Monomer. Interacts (via C-terminus) with RAP94 (via N-terminus). Interacts with the cap-specific mRNA (nucleoside-2'-O-)-methyltransferase.

It localises to the virion. It catalyses the reaction a ribonucleoside 5'-triphosphate + H2O = a ribonucleoside 5'-diphosphate + phosphate + H(+). Its function is as follows. DNA-dependent ATPase required for providing the needed energy to achieve the termination of early transcripts. Acts in concert with the RAP94 subunit of the virion RNA polymerase and the capping enzyme/VTF to catalyze release of UUUUUNU-containing nascent RNA from the elongation complex. NPH-I must bind ssDNA in order to exhibit ATPase activity. The polypeptide is Nucleoside triphosphatase I (NPH1) (Vertebrata (FPV)).